The sequence spans 489 residues: Glutamyl-tRNA(Gln) amidotransferase subunit A (489 aa).

Catalysis depends on charge relay system residues Lys-77 and Ser-152. Residue Ser-176 is the Acyl-ester intermediate of the active site.

The protein belongs to the amidase family. GatA subfamily. In terms of assembly, heterotrimer of A, B and C subunits.

The catalysed reaction is L-glutamyl-tRNA(Gln) + L-glutamine + ATP + H2O = L-glutaminyl-tRNA(Gln) + L-glutamate + ADP + phosphate + H(+). Its function is as follows. Allows the formation of correctly charged Gln-tRNA(Gln) through the transamidation of misacylated Glu-tRNA(Gln) in organisms which lack glutaminyl-tRNA synthetase. The reaction takes place in the presence of glutamine and ATP through an activated gamma-phospho-Glu-tRNA(Gln). This is Glutamyl-tRNA(Gln) amidotransferase subunit A from Levilactobacillus brevis (strain ATCC 367 / BCRC 12310 / CIP 105137 / JCM 1170 / LMG 11437 / NCIMB 947 / NCTC 947) (Lactobacillus brevis).